The chain runs to 379 residues: Cytochrome b (379 aa).

A run of 4 helical transmembrane segments spans residues 33–53 (FGSLLGMCLVIQILTGLFLAM), 77–98 (WLIRYLHANGASMFFICLFIHV), 113–133 (WNIGIILLLTTMATAFVGYVL), and 178–198 (FFAFHFILPFIIAAFALVHLL). 2 residues coordinate heme b: H83 and H97. Heme b is bound by residues H182 and H196. H201 lines the a ubiquinone pocket. A run of 4 helical transmembrane segments spans residues 226–246 (IKDLLGIFLLLLVLMTLALFF), 288–308 (LGGVLALVLSILILAAFPLLN), 320–340 (VTQTIYWIFIANLLVLTWIGG), and 347–367 (FTTIGQIASITYFTIIIILIP).

It belongs to the cytochrome b family. As to quaternary structure, the cytochrome bc1 complex contains 11 subunits: 3 respiratory subunits (MT-CYB, CYC1 and UQCRFS1), 2 core proteins (UQCRC1 and UQCRC2) and 6 low-molecular weight proteins (UQCRH/QCR6, UQCRB/QCR7, UQCRQ/QCR8, UQCR10/QCR9, UQCR11/QCR10 and a cleavage product of UQCRFS1). This cytochrome bc1 complex then forms a dimer. It depends on heme b as a cofactor.

Its subcellular location is the mitochondrion inner membrane. Component of the ubiquinol-cytochrome c reductase complex (complex III or cytochrome b-c1 complex) that is part of the mitochondrial respiratory chain. The b-c1 complex mediates electron transfer from ubiquinol to cytochrome c. Contributes to the generation of a proton gradient across the mitochondrial membrane that is then used for ATP synthesis. The polypeptide is Cytochrome b (MT-CYB) (Akodon lindberghi (Lindbergh's grass mouse)).